The sequence spans 688 residues: UvrABC system protein B (688 aa).

Residues 31-188 (GRVNAGEPDV…RKFVSMQYQR (158 aa)) form the Helicase ATP-binding domain. 44–51 (GATGTGKS) contributes to the ATP binding site. Residues 97–120 (YYDYYQPEAYVPQTDTFIEKDSSV) carry the Beta-hairpin motif. In terms of domain architecture, Helicase C-terminal spans 434 to 587 (QIDDLLEQIR…QVAYNTEHGI (154 aa)). The tract at residues 607–632 (GEDTKKMLEGRGGGKRSPTPNLRREG) is disordered. One can recognise a UVR domain in the interval 642-677 (ETIISDLNDQMLQAAGELKFELAARLRDELGDLKRE).

The protein belongs to the UvrB family. Forms a heterotetramer with UvrA during the search for lesions. Interacts with UvrC in an incision complex.

It localises to the cytoplasm. The UvrABC repair system catalyzes the recognition and processing of DNA lesions. A damage recognition complex composed of 2 UvrA and 2 UvrB subunits scans DNA for abnormalities. Upon binding of the UvrA(2)B(2) complex to a putative damaged site, the DNA wraps around one UvrB monomer. DNA wrap is dependent on ATP binding by UvrB and probably causes local melting of the DNA helix, facilitating insertion of UvrB beta-hairpin between the DNA strands. Then UvrB probes one DNA strand for the presence of a lesion. If a lesion is found the UvrA subunits dissociate and the UvrB-DNA preincision complex is formed. This complex is subsequently bound by UvrC and the second UvrB is released. If no lesion is found, the DNA wraps around the other UvrB subunit that will check the other stand for damage. This Clavibacter michiganensis subsp. michiganensis (strain NCPPB 382) protein is UvrABC system protein B.